The primary structure comprises 212 residues: Transmembrane protein 65 (212 aa).

Residues 1–88 lie on the Cytoplasmic side of the membrane; the sequence is MIRSVLLRAL…SRLTAAQLRY (88 aa). Residues 89–109 traverse the membrane as a helical segment; it reads ILLHNAIPFIGFGFLDNAIMI. Over 110-116 the chain is Extracellular; the sequence is AAGTQIE. The chain crosses the membrane as a helical span at residues 117–137; the sequence is LSIGLTLGISTMAAAALGNLV. At 138–139 the chain is on the cytoplasmic side; sequence SD. A helical membrane pass occupies residues 140–160; it reads LAGLGLAGYVEALAVRLGMQI. The Extracellular portion of the chain corresponds to 161–178; sequence PDLSPRQVDMWQTRVSSH. The helical transmembrane segment at 179–199 threads the bilayer; sequence MGKAIGVAIGCILGMFPLLFL. Over 200–212 the chain is Cytoplasmic; that stretch reads SDEEDKKPKKDSN.

Monomer. Homodimer. Interacts with GJA1. As to expression, expression is restricted to the heart (at protein level).

The protein resides in the cell membrane. The protein localises to the mitochondrion inner membrane. In terms of biological role, essential for maintaining proper cardiac intercalated disk (ICD) structure and function. May regulate cardiac conduction and the function of the gap junction protein GJA1. May contribute to the stability and proper localization of GJA1 to cardiac intercalated disk thereby regulating gap junction communication. Regulates mitochondrial respiration and mitochondrial DNA copy number maintenance. In Danio rerio (Zebrafish), this protein is Transmembrane protein 65 (tmem65).